The following is a 304-amino-acid chain: Polyisoprenyl-teichoic acid--peptidoglycan teichoic acid transferase TagU (304 aa).

Topologically, residues 1-4 are cytoplasmic; it reads MKKK. A helical; Signal-anchor for type II membrane protein transmembrane segment spans residues 5 to 25; the sequence is ILFWILGIIGILIIGGGAYAY. The Extracellular segment spans residues 26-304; that stretch reads SIYSSVSKTL…KLRAHLEVTK (279 aa).

It belongs to the LytR/CpsA/Psr (LCP) family.

Its subcellular location is the cell membrane. Its pathway is cell wall biogenesis. In terms of biological role, may catalyze the final step in cell wall teichoic acid biosynthesis, the transfer of the anionic cell wall polymers (APs) from their lipid-linked precursor to the cell wall peptidoglycan (PG). This is Polyisoprenyl-teichoic acid--peptidoglycan teichoic acid transferase TagU from Bacillus cereus (strain ATCC 14579 / DSM 31 / CCUG 7414 / JCM 2152 / NBRC 15305 / NCIMB 9373 / NCTC 2599 / NRRL B-3711).